Here is a 362-residue protein sequence, read N- to C-terminus: sn-glycerol-3-phosphate import ATP-binding protein UgpC (362 aa).

One can recognise an ABC transporter domain in the interval 4-235 (LSFRNVKKTY…PASTFVAGFI (232 aa)). 37–44 (GPSGCGKS) lines the ATP pocket.

Belongs to the ABC transporter superfamily. sn-glycerol-3-phosphate importer (TC 3.A.1.1.3) family. In terms of assembly, the complex is composed of two ATP-binding proteins (UgpC), two transmembrane proteins (UgpA and UgpE) and a solute-binding protein (UgpB).

The protein localises to the cell inner membrane. The catalysed reaction is sn-glycerol 3-phosphate(out) + ATP + H2O = sn-glycerol 3-phosphate(in) + ADP + phosphate + H(+). In terms of biological role, part of the ABC transporter complex UgpBAEC involved in sn-glycerol-3-phosphate (G3P) import. Responsible for energy coupling to the transport system. The protein is sn-glycerol-3-phosphate import ATP-binding protein UgpC of Bordetella bronchiseptica (strain ATCC BAA-588 / NCTC 13252 / RB50) (Alcaligenes bronchisepticus).